A 299-amino-acid chain; its full sequence is Acetylglutamate kinase (299 aa).

Residues G68–G69, R90, and N194 contribute to the substrate site.

Belongs to the acetylglutamate kinase family. ArgB subfamily.

Its subcellular location is the cytoplasm. The enzyme catalyses N-acetyl-L-glutamate + ATP = N-acetyl-L-glutamyl 5-phosphate + ADP. It functions in the pathway amino-acid biosynthesis; L-arginine biosynthesis; N(2)-acetyl-L-ornithine from L-glutamate: step 2/4. Its function is as follows. Catalyzes the ATP-dependent phosphorylation of N-acetyl-L-glutamate. The protein is Acetylglutamate kinase of Psychrobacter cryohalolentis (strain ATCC BAA-1226 / DSM 17306 / VKM B-2378 / K5).